Here is a 297-residue protein sequence, read N- to C-terminus: Transcription factor PCF8 (297 aa).

The tract at residues M1–G22 is disordered. The region spanning G46–L104 is the TCP domain. Disordered regions lie at residues A116 to S136 and A273 to T297. Residues G282–T297 are compositionally biased toward basic and acidic residues.

In terms of assembly, forms homodimers and heterodimers.

The protein localises to the nucleus. Its function is as follows. Transcription activator. Binds the promoter core sequence 5'-GGNCC-3'. The protein is Transcription factor PCF8 (PCF8) of Oryza sativa subsp. indica (Rice).